The sequence spans 270 residues: Release factor glutamine methyltransferase (270 aa).

Residues 113–117 (GTGSG), Asp136, and Asn177 each bind S-adenosyl-L-methionine. Residue 177-180 (NPPY) coordinates substrate.

Belongs to the protein N5-glutamine methyltransferase family. PrmC subfamily.

The catalysed reaction is L-glutaminyl-[peptide chain release factor] + S-adenosyl-L-methionine = N(5)-methyl-L-glutaminyl-[peptide chain release factor] + S-adenosyl-L-homocysteine + H(+). Its function is as follows. Methylates the class 1 translation termination release factors RF1/PrfA and RF2/PrfB on the glutamine residue of the universally conserved GGQ motif. In Lactococcus lactis subsp. lactis (strain IL1403) (Streptococcus lactis), this protein is Release factor glutamine methyltransferase.